The sequence spans 351 residues: Delta(7)-sterol 5(6)-desaturase (351 aa).

3 helical membrane passes run L88–F108, G136–H156, and V173–L193. The Fatty acid hydroxylase domain occupies L180–G305. Residues H194–H198 carry the Histidine box-1 motif. The Histidine box-2 motif lies at H207–H211. Residues H237–V257 form a helical membrane-spanning segment. A Histidine box-3 motif is present at residues H282–H286.

It belongs to the sterol desaturase family. The cofactor is Fe cation.

Its subcellular location is the endoplasmic reticulum membrane. It catalyses the reaction a Delta(7)-sterol + 2 Fe(II)-[cytochrome b5] + O2 + 2 H(+) = a Delta(5),Delta(7)-sterol + 2 Fe(III)-[cytochrome b5] + 2 H2O. It participates in steroid metabolism; ergosterol biosynthesis; ergosterol from zymosterol: step 3/5. Its function is as follows. Catalyzes the introduction of a C-5 double bond in the B ring of ergosterol. May contribute to the regulation of ergosterol biosynthesis. This Eremothecium gossypii (strain ATCC 10895 / CBS 109.51 / FGSC 9923 / NRRL Y-1056) (Yeast) protein is Delta(7)-sterol 5(6)-desaturase (ERG3).